We begin with the raw amino-acid sequence, 205 residues long: Phosphoribosyl-dephospho-CoA transferase (205 aa).

Residues Asp134 and Asp136 contribute to the active site.

It belongs to the MdcG family.

The catalysed reaction is apo-[malonate decarboxylase ACP] + 2'-(5''-triphospho-alpha-D-ribosyl)-3'-dephospho-CoA = holo-[malonate decarboxylase ACP] + diphosphate. Transfers 2'-(5-triphosphoribosyl)-3'-dephosphocoenzyme-A to the apo-[acyl-carrier-protein] of the malonate decarboxylase to yield holo-[acyl-carrier-protein]. The protein is Phosphoribosyl-dephospho-CoA transferase of Klebsiella pneumoniae subsp. pneumoniae (strain ATCC 700721 / MGH 78578).